The sequence spans 421 residues: UDP-N-acetylglucosamine 1-carboxyvinyltransferase 2 (421 aa).

22–23 (KN) serves as a coordination point for phosphoenolpyruvate. Arg95 serves as a coordination point for UDP-N-acetyl-alpha-D-glucosamine. The Proton donor role is filled by Cys119. Cys119 is modified (2-(S-cysteinyl)pyruvic acid O-phosphothioketal). Residues 124–128 (RPIEQ), Asp308, and Val330 contribute to the UDP-N-acetyl-alpha-D-glucosamine site.

It belongs to the EPSP synthase family. MurA subfamily.

The protein resides in the cytoplasm. It carries out the reaction phosphoenolpyruvate + UDP-N-acetyl-alpha-D-glucosamine = UDP-N-acetyl-3-O-(1-carboxyvinyl)-alpha-D-glucosamine + phosphate. Its pathway is cell wall biogenesis; peptidoglycan biosynthesis. In terms of biological role, cell wall formation. Adds enolpyruvyl to UDP-N-acetylglucosamine. The polypeptide is UDP-N-acetylglucosamine 1-carboxyvinyltransferase 2 (Staphylococcus saprophyticus subsp. saprophyticus (strain ATCC 15305 / DSM 20229 / NCIMB 8711 / NCTC 7292 / S-41)).